A 119-amino-acid chain; its full sequence is Ribonuclease P protein component (119 aa).

The protein belongs to the RnpA family. In terms of assembly, consists of a catalytic RNA component (M1 or rnpB) and a protein subunit.

It catalyses the reaction Endonucleolytic cleavage of RNA, removing 5'-extranucleotides from tRNA precursor.. Its function is as follows. RNaseP catalyzes the removal of the 5'-leader sequence from pre-tRNA to produce the mature 5'-terminus. It can also cleave other RNA substrates such as 4.5S RNA. The protein component plays an auxiliary but essential role in vivo by binding to the 5'-leader sequence and broadening the substrate specificity of the ribozyme. The chain is Ribonuclease P protein component from Photorhabdus laumondii subsp. laumondii (strain DSM 15139 / CIP 105565 / TT01) (Photorhabdus luminescens subsp. laumondii).